Here is a 318-residue protein sequence, read N- to C-terminus: Ribose-phosphate pyrophosphokinase 1 (318 aa).

ATP contacts are provided by residues 43–45 and 102–103; these read DGE and RQ. His-136 and Asp-176 together coordinate Mg(2+). Residue Lys-199 is part of the active site. D-ribose 5-phosphate contacts are provided by residues Arg-201, Asp-225, and 229 to 233; that span reads DTAGT.

Belongs to the ribose-phosphate pyrophosphokinase family. Class I subfamily. As to quaternary structure, homohexamer. Requires Mg(2+) as cofactor.

The protein resides in the cytoplasm. It catalyses the reaction D-ribose 5-phosphate + ATP = 5-phospho-alpha-D-ribose 1-diphosphate + AMP + H(+). It functions in the pathway metabolic intermediate biosynthesis; 5-phospho-alpha-D-ribose 1-diphosphate biosynthesis; 5-phospho-alpha-D-ribose 1-diphosphate from D-ribose 5-phosphate (route I): step 1/1. Its function is as follows. Involved in the biosynthesis of the central metabolite phospho-alpha-D-ribosyl-1-pyrophosphate (PRPP) via the transfer of pyrophosphoryl group from ATP to 1-hydroxyl of ribose-5-phosphate (Rib-5-P). This Listeria innocua serovar 6a (strain ATCC BAA-680 / CLIP 11262) protein is Ribose-phosphate pyrophosphokinase 1.